Consider the following 628-residue polypeptide: ATP-binding cassette sub-family F member 2 (628 aa).

Residues 1–57 (MPSDLAKKKAAKKKEAAKARQRPRKGHEENGDAVTEPQVAEEKIEEANGRETTGDGE) are disordered. Residues 40–53 (AEEKIEEANGRETT) are compositionally biased toward basic and acidic residues. ABC transporter domains follow at residues 91–330 (VHII…ENQM) and 401–618 (IMVQ…VDEE). 123–130 (GLNGIGKS) serves as a coordination point for ATP. Position 223 is a phosphothreonine (Thr-223). N6-acetyllysine is present on Lys-309. Position 435-442 (435-442 (GPNGAGKS)) interacts with ATP. Ser-517 carries the phosphoserine modification.

Belongs to the ABC transporter superfamily. ABCF family. EF3 subfamily.

The sequence is that of ATP-binding cassette sub-family F member 2 from Mus musculus (Mouse).